Consider the following 128-residue polypeptide: Phosphoribosyl-AMP cyclohydrolase (128 aa).

Position 89 (Asp-89) interacts with Mg(2+). Cys-90 is a Zn(2+) binding site. 2 residues coordinate Mg(2+): Asp-91 and Asp-93. Positions 106 and 113 each coordinate Zn(2+).

Belongs to the PRA-CH family. As to quaternary structure, homodimer. Mg(2+) is required as a cofactor. It depends on Zn(2+) as a cofactor.

It localises to the cytoplasm. The enzyme catalyses 1-(5-phospho-beta-D-ribosyl)-5'-AMP + H2O = 1-(5-phospho-beta-D-ribosyl)-5-[(5-phospho-beta-D-ribosylamino)methylideneamino]imidazole-4-carboxamide. It functions in the pathway amino-acid biosynthesis; L-histidine biosynthesis; L-histidine from 5-phospho-alpha-D-ribose 1-diphosphate: step 3/9. Its function is as follows. Catalyzes the hydrolysis of the adenine ring of phosphoribosyl-AMP. The polypeptide is Phosphoribosyl-AMP cyclohydrolase (Pyrobaculum calidifontis (strain DSM 21063 / JCM 11548 / VA1)).